The sequence spans 483 residues: Ero1-like protein (483 aa).

The N-terminal stretch at 1-29 is a signal peptide; sequence MTTRTVQRNLWASAAVVLVLLLLWTDTTG. Cystine bridges form between Cys-44–Cys-57, Cys-46–Cys-55, Cys-94–Cys-402, Cys-103–Cys-108, Cys-227–Cys-251, and Cys-405–Cys-408. The FAD site is built by Arg-206, Thr-208, and Trp-219. An N-linked (GlcNAc...) asparagine glycan is attached at Asn-232. Residues Ser-262, His-265, and Arg-301 each coordinate FAD. N-linked (GlcNAc...) asparagine glycosylation occurs at Asn-395.

It belongs to the EROs family. As to quaternary structure, may function both as a monomer and a homodimer. FAD serves as cofactor.

It localises to the endoplasmic reticulum membrane. In terms of biological role, oxidoreductase involved in disulfide bond formation in the endoplasmic reticulum. Efficiently reoxidizes pdi-1, the enzyme catalyzing protein disulfide formation, in order to allow pdi-1 to sustain additional rounds of disulfide formation. Following pdi reoxidation, passes its electrons to molecular oxygen via FAD, leading to the production of reactive oxygen species (ROS) in the cell. In Drosophila melanogaster (Fruit fly), this protein is Ero1-like protein (Ero1L).